Consider the following 474-residue polypeptide: MTQKLHIKTWGCQMNEYDSAKIADLLLSTHGLELTEEAEQADVLLLNTCSIREKAQEKVFSQLGRWKTWKNEKPGLIIGVGGCVASQEGEHIRERAPFVDIIFGPQTLHRLPEMINQIRGGKSSVVDVSFPEIEKFDCLPEPKAEGPTAFVSIMEGCNKYCTYCVVPYTRGEEVSRPLDDVLFEVAQLADQGVREINLLGQNVNAYRGPTHDGGICTFAELLRLVASIDGIDRLRFTTSHPIEFTDDIIDVYADTPELVSFLHLPVQSGADRILTMMKRGHTALEYKSIIRKLRKVRPDIQISSDFIVGFPGETNEEFEQTMNLIADVNFDMSFSFVYSARPGTPAADMPDDVSEEEKKQRLYLLQQRINNQAAKFSRAMLGTEQRVLVEGPSKKDIMELTGRTENNRIVNFKGTPDMIGKFVDIQITDVFTNSLRGDVIRTEDEMGLRVEQSPQSVIRRTRKEDELGVGKYVA.

One can recognise an MTTase N-terminal domain in the interval 3-120; it reads QKLHIKTWGC…LPEMINQIRG (118 aa). Residues Cys12, Cys49, Cys83, Cys157, Cys161, and Cys164 each contribute to the [4Fe-4S] cluster site. One can recognise a Radical SAM core domain in the interval 143-375; that stretch reads KAEGPTAFVS…QQRINNQAAK (233 aa). In terms of domain architecture, TRAM spans 378–441; sequence RAMLGTEQRV…TNSLRGDVIR (64 aa).

Belongs to the methylthiotransferase family. MiaB subfamily. Monomer. [4Fe-4S] cluster serves as cofactor.

The protein localises to the cytoplasm. The enzyme catalyses N(6)-dimethylallyladenosine(37) in tRNA + (sulfur carrier)-SH + AH2 + 2 S-adenosyl-L-methionine = 2-methylsulfanyl-N(6)-dimethylallyladenosine(37) in tRNA + (sulfur carrier)-H + 5'-deoxyadenosine + L-methionine + A + S-adenosyl-L-homocysteine + 2 H(+). Its function is as follows. Catalyzes the methylthiolation of N6-(dimethylallyl)adenosine (i(6)A), leading to the formation of 2-methylthio-N6-(dimethylallyl)adenosine (ms(2)i(6)A) at position 37 in tRNAs that read codons beginning with uridine. This chain is tRNA-2-methylthio-N(6)-dimethylallyladenosine synthase, found in Actinobacillus succinogenes (strain ATCC 55618 / DSM 22257 / CCUG 43843 / 130Z).